Here is a 463-residue protein sequence, read N- to C-terminus: UDP-N-acetylmuramoyl-L-alanyl-D-glutamate--2,6-diaminopimelate ligase (463 aa).

UDP-N-acetyl-alpha-D-muramoyl-L-alanyl-D-glutamate is bound at residue Thr-21. ATP is bound at residue 94–100; that stretch reads GTNGKTT. Residues 137-138, Ser-164, Gln-170, and Arg-172 contribute to the UDP-N-acetyl-alpha-D-muramoyl-L-alanyl-D-glutamate site; that span reads TT. Lys-204 carries the post-translational modification N6-carboxylysine. Residues Arg-358, 382 to 385, Gly-433, and Glu-437 each bind meso-2,6-diaminopimelate; that span reads DNPR. A Meso-diaminopimelate recognition motif motif is present at residues 382–385; the sequence is DNPR.

The protein belongs to the MurCDEF family. MurE subfamily. It depends on Mg(2+) as a cofactor. In terms of processing, carboxylation is probably crucial for Mg(2+) binding and, consequently, for the gamma-phosphate positioning of ATP.

It localises to the cytoplasm. It carries out the reaction UDP-N-acetyl-alpha-D-muramoyl-L-alanyl-D-glutamate + meso-2,6-diaminopimelate + ATP = UDP-N-acetyl-alpha-D-muramoyl-L-alanyl-gamma-D-glutamyl-meso-2,6-diaminopimelate + ADP + phosphate + H(+). It functions in the pathway cell wall biogenesis; peptidoglycan biosynthesis. Catalyzes the addition of meso-diaminopimelic acid to the nucleotide precursor UDP-N-acetylmuramoyl-L-alanyl-D-glutamate (UMAG) in the biosynthesis of bacterial cell-wall peptidoglycan. This Helicobacter hepaticus (strain ATCC 51449 / 3B1) protein is UDP-N-acetylmuramoyl-L-alanyl-D-glutamate--2,6-diaminopimelate ligase.